Here is a 95-residue protein sequence, read N- to C-terminus: Small ribosomal subunit protein uS17 (95 aa).

Belongs to the universal ribosomal protein uS17 family. In terms of assembly, part of the 30S ribosomal subunit.

Functionally, one of the primary rRNA binding proteins, it binds specifically to the 5'-end of 16S ribosomal RNA. This Psychrobacter sp. (strain PRwf-1) protein is Small ribosomal subunit protein uS17.